Here is a 264-residue protein sequence, read N- to C-terminus: uncharacterized protein (264 aa).

Residues 7-27 (LTLGICLVLLIILIVGYVIMT) form a helical membrane-spanning segment.

The protein belongs to the staphylococcal tandem lipoprotein family.

It is found in the cell membrane. This is an uncharacterized protein from Staphylococcus aureus (strain MRSA252).